The following is a 218-amino-acid chain: Putative inactive cathepsin L-like protein CTSL3P (218 aa).

2 disordered regions span residues Gly-144–Gln-173 and Gly-195–Val-218. Basic and acidic residues predominate over residues Glu-201–Leu-212.

Belongs to the peptidase C1 family.

The polypeptide is Putative inactive cathepsin L-like protein CTSL3P (CTSL3P) (Homo sapiens (Human)).